The sequence spans 574 residues: Putative thiamine pyrophosphate-containing protein YdaP (574 aa).

Residues 28–55 (DSINEFIEELRHERNQLKFIQTRHEEVA) are a coiled coil. Glu-52 provides a ligand contact to thiamine diphosphate. Residues 256 to 277 (IGTK…LGTS) and 294 to 313 (DSDP…LVCD) each bind FAD. Residues 384 to 464 (TVTVWMARHF…ITVVILNNEN (81 aa)) are thiamine pyrophosphate binding. Positions 435 and 462 each coordinate Mg(2+).

It belongs to the TPP enzyme family. Mg(2+) is required as a cofactor. Thiamine diphosphate serves as cofactor.

The chain is Putative thiamine pyrophosphate-containing protein YdaP (ydaP) from Bacillus subtilis (strain 168).